The chain runs to 326 residues: Diphthine methyltransferase (326 aa).

WD repeat units lie at residues 65–105 (MHCD…ELMF), 113–152 (DSSV…IKNK), 155–195 (EHDY…SCIW), and 293–326 (EHES…WEDI).

The protein belongs to the DPH7 family.

It localises to the cytoplasm. The protein resides in the nucleus. The enzyme catalyses diphthine methyl ester-[translation elongation factor 2] + H2O = diphthine-[translation elongation factor 2] + methanol + H(+). It participates in protein modification; peptidyl-diphthamide biosynthesis. Catalyzes the demethylation of diphthine methyl ester to form diphthine, an intermediate in diphthamide biosynthesis, a post-translational modification of histidine which occurs in translation elongation factor 2 (eft201 and eft202). This is Diphthine methyltransferase (rrt2) from Schizosaccharomyces pombe (strain 972 / ATCC 24843) (Fission yeast).